A 614-amino-acid polypeptide reads, in one-letter code: MTTLLRLATAGSVDDGKSTLIGRLLYDSKAVMEDQWASVEQTSKDRGHDYTDLALVTDGLRAEREQGITIDVAYRYFATPKRKFIIADTPGHIQYTRNMVTGASTAQLVIVLVDARHGLLEQSRRHAFLASLLGIRHLVLAVNKMDLLGWDQEKFDAIRDEFHAFAARLDVQDVTSIPISALHGDNVVTKSDQTPWYEGPSLLSHLEDVYIAGDRNMVDVRFPVQYVIRPHTLEHQDHRSYAGTVASGVMRSGDEVVVLPIGKTTRITAIDGPNGPVAEAFPPMAVSVRLADDIDISRGDMIARTHNQPRITQEFDATVCWMADNAVLEPGRDYVVKHTTRTVRARIAGLDYRLDVNTLHRDKTATALKLNELGRVSLRTQVPLLLDEYTRNASTGSFILIDPDTNGTVAAGMVLRDVSARTPSPNTVRHRSLVTAQDRPPRGKTVWFTGLSGSGKSSVAMLVERKLLEKGISAYVLDGDNLRHGLNADLGFSMADRAENLRRLSHVATLLADCGHLVLVPAISPLAEHRALARKVHADAGIDFFEVFCDTPLQDCERRDPKGLYAKARAGEITHFTGIDSPYQRPKNPDLRLTPDRSIDEQAQEVIDLLESSS.

Residues 1-441 (MTTLLRLATA…SLVTAQDRPP (441 aa)) are sulfate adenylyltransferase. One can recognise a tr-type G domain in the interval 2–217 (TTLLRLATAG…DVYIAGDRNM (216 aa)). The tract at residues 11–18 (GSVDDGKS) is G1. 11–18 (GSVDDGKS) contacts GTP. Residues 67-71 (GITID) form a G2 region. Residues 88–91 (DTPG) form a G3 region. GTP is bound by residues 88–92 (DTPGH) and 143–146 (NKMD). The interval 143 to 146 (NKMD) is G4. Positions 180–182 (SAL) are G5. Residues 442-614 (RGKTVWFTGL…EVIDLLESSS (173 aa)) form an adenylyl-sulfate kinase region. 450–457 (GLSGSGKS) is a binding site for ATP. The active-site Phosphoserine intermediate is the Ser524. The disordered stretch occupies residues 578–597 (GIDSPYQRPKNPDLRLTPDR). Over residues 587–597 (KNPDLRLTPDR) the composition is skewed to basic and acidic residues.

In the C-terminal section; belongs to the APS kinase family. The protein in the N-terminal section; belongs to the TRAFAC class translation factor GTPase superfamily. Classic translation factor GTPase family. CysN/NodQ subfamily. Heterodimer composed of CysD, the smaller subunit, and CysNC.

The enzyme catalyses sulfate + ATP + H(+) = adenosine 5'-phosphosulfate + diphosphate. It carries out the reaction adenosine 5'-phosphosulfate + ATP = 3'-phosphoadenylyl sulfate + ADP + H(+). The protein operates within sulfur metabolism; hydrogen sulfide biosynthesis; sulfite from sulfate: step 1/3. It participates in sulfur metabolism; hydrogen sulfide biosynthesis; sulfite from sulfate: step 2/3. Functionally, with CysD forms the ATP sulfurylase (ATPS) that catalyzes the adenylation of sulfate producing adenosine 5'-phosphosulfate (APS) and diphosphate, the first enzymatic step in sulfur assimilation pathway. APS synthesis involves the formation of a high-energy phosphoric-sulfuric acid anhydride bond driven by GTP hydrolysis by CysN coupled to ATP hydrolysis by CysD. Its function is as follows. APS kinase catalyzes the synthesis of activated sulfate. This Mycobacterium tuberculosis (strain CDC 1551 / Oshkosh) protein is Bifunctional enzyme CysN/CysC (cysNC).